The primary structure comprises 292 residues: D-galactarolactone isomerase (292 aa).

This sequence belongs to the metallo-dependent hydrolases superfamily. Does not require a metal cofactor. is required as a cofactor.

It catalyses the reaction D-galactaro-1,5-lactone = D-galactaro-1,4-lactone. It functions in the pathway carbohydrate acid metabolism; D-galacturonate degradation via prokaryotic oxidative pathway. In terms of biological role, catalyzes the isomerization of D-galactaro-1,5-lactone to D-galactaro-1,4-lactone. This is a step in the oxidative degradation pathway of D-galacturonate, which allows A.tumefaciens to utilize D-galacturonate as a sole carbon source. The chain is D-galactarolactone isomerase from Agrobacterium fabrum (strain C58 / ATCC 33970) (Agrobacterium tumefaciens (strain C58)).